A 200-amino-acid chain; its full sequence is FMN-dependent NADH:quinone oxidoreductase 2 (200 aa).

Residue 135–138 participates in FMN binding; it reads SRGG.

Belongs to the azoreductase type 1 family. Homodimer. The cofactor is FMN.

It carries out the reaction 2 a quinone + NADH + H(+) = 2 a 1,4-benzosemiquinone + NAD(+). The catalysed reaction is N,N-dimethyl-1,4-phenylenediamine + anthranilate + 2 NAD(+) = 2-(4-dimethylaminophenyl)diazenylbenzoate + 2 NADH + 2 H(+). Quinone reductase that provides resistance to thiol-specific stress caused by electrophilic quinones. Its function is as follows. Also exhibits azoreductase activity. Catalyzes the reductive cleavage of the azo bond in aromatic azo compounds to the corresponding amines. This Clostridium acetobutylicum (strain ATCC 824 / DSM 792 / JCM 1419 / IAM 19013 / LMG 5710 / NBRC 13948 / NRRL B-527 / VKM B-1787 / 2291 / W) protein is FMN-dependent NADH:quinone oxidoreductase 2.